We begin with the raw amino-acid sequence, 129 residues long: Small ribosomal subunit protein uS9 (129 aa).

The interval 98–129 is disordered; that stretch reads KAQGFLTRDPRKKERKKYGRKKARKSFQFSKR. A compositionally biased stretch (basic residues) spans 110–129; the sequence is KERKKYGRKKARKSFQFSKR.

This sequence belongs to the universal ribosomal protein uS9 family.

The polypeptide is Small ribosomal subunit protein uS9 (Chlamydia trachomatis serovar L2 (strain ATCC VR-902B / DSM 19102 / 434/Bu)).